Reading from the N-terminus, the 291-residue chain is ATP phosphoribosyltransferase 1 (291 aa).

Belongs to the ATP phosphoribosyltransferase family. Long subfamily. Requires Mg(2+) as cofactor.

The protein localises to the cytoplasm. It catalyses the reaction 1-(5-phospho-beta-D-ribosyl)-ATP + diphosphate = 5-phospho-alpha-D-ribose 1-diphosphate + ATP. Its pathway is amino-acid biosynthesis; L-histidine biosynthesis; L-histidine from 5-phospho-alpha-D-ribose 1-diphosphate: step 1/9. Feedback inhibited by histidine. In terms of biological role, catalyzes the condensation of ATP and 5-phosphoribose 1-diphosphate to form N'-(5'-phosphoribosyl)-ATP (PR-ATP). Has a crucial role in the pathway because the rate of histidine biosynthesis seems to be controlled primarily by regulation of HisG enzymatic activity. The chain is ATP phosphoribosyltransferase 1 from Geobacter sulfurreducens (strain ATCC 51573 / DSM 12127 / PCA).